The primary structure comprises 286 residues: Putative electron transfer flavoprotein subunit YgcQ (286 aa).

225–253 (VCIVVGASGAAALMAGVRNSKFVVAINHD) is an FAD binding site.

This sequence belongs to the ETF alpha-subunit/FixB family. In terms of assembly, ygcQ and YgcR form a heterodimer.

In terms of biological role, may play a role in a redox process. This is Putative electron transfer flavoprotein subunit YgcQ (ygcQ) from Escherichia coli (strain K12).